Here is a 206-residue protein sequence, read N- to C-terminus: Histidine biosynthesis bifunctional protein HisIE (206 aa).

The interval methionine 1 to phenylalanine 117 is phosphoribosyl-AMP cyclohydrolase. The phosphoribosyl-ATP pyrophosphohydrolase stretch occupies residues leucine 118–glutamine 206.

It in the N-terminal section; belongs to the PRA-CH family. The protein in the C-terminal section; belongs to the PRA-PH family.

It localises to the cytoplasm. The catalysed reaction is 1-(5-phospho-beta-D-ribosyl)-ATP + H2O = 1-(5-phospho-beta-D-ribosyl)-5'-AMP + diphosphate + H(+). It carries out the reaction 1-(5-phospho-beta-D-ribosyl)-5'-AMP + H2O = 1-(5-phospho-beta-D-ribosyl)-5-[(5-phospho-beta-D-ribosylamino)methylideneamino]imidazole-4-carboxamide. The protein operates within amino-acid biosynthesis; L-histidine biosynthesis; L-histidine from 5-phospho-alpha-D-ribose 1-diphosphate: step 2/9. Its pathway is amino-acid biosynthesis; L-histidine biosynthesis; L-histidine from 5-phospho-alpha-D-ribose 1-diphosphate: step 3/9. The chain is Histidine biosynthesis bifunctional protein HisIE from Xanthomonas axonopodis pv. citri (strain 306).